A 150-amino-acid polypeptide reads, in one-letter code: D-aminoacyl-tRNA deacylase (150 aa).

The Gly-cisPro motif, important for rejection of L-amino acids motif lies at 137–138 (GP).

It belongs to the DTD family. Homodimer.

The protein resides in the cytoplasm. It carries out the reaction glycyl-tRNA(Ala) + H2O = tRNA(Ala) + glycine + H(+). It catalyses the reaction a D-aminoacyl-tRNA + H2O = a tRNA + a D-alpha-amino acid + H(+). Its function is as follows. An aminoacyl-tRNA editing enzyme that deacylates mischarged D-aminoacyl-tRNAs. Also deacylates mischarged glycyl-tRNA(Ala), protecting cells against glycine mischarging by AlaRS. Acts via tRNA-based rather than protein-based catalysis; rejects L-amino acids rather than detecting D-amino acids in the active site. By recycling D-aminoacyl-tRNA to D-amino acids and free tRNA molecules, this enzyme counteracts the toxicity associated with the formation of D-aminoacyl-tRNA entities in vivo and helps enforce protein L-homochirality. The sequence is that of D-aminoacyl-tRNA deacylase from Listeria innocua serovar 6a (strain ATCC BAA-680 / CLIP 11262).